Reading from the N-terminus, the 404-residue chain is S-adenosylmethionine synthase (404 aa).

ATP is bound at residue 141 to 146 (GQGSVD).

The protein belongs to the AdoMet synthase 2 family. Mg(2+) is required as a cofactor.

It carries out the reaction L-methionine + ATP + H2O = S-adenosyl-L-methionine + phosphate + diphosphate. It participates in amino-acid biosynthesis; S-adenosyl-L-methionine biosynthesis; S-adenosyl-L-methionine from L-methionine: step 1/1. In terms of biological role, catalyzes the formation of S-adenosylmethionine from methionine and ATP. The chain is S-adenosylmethionine synthase from Methanococcus vannielii (strain ATCC 35089 / DSM 1224 / JCM 13029 / OCM 148 / SB).